A 274-amino-acid chain; its full sequence is Large ribosomal subunit protein uL2 (274 aa).

Residues 223 to 256 (VVMNPVDHPHGGGEGKTGEGRHPVDPWGNLTKGY) are disordered. A compositionally biased stretch (basic and acidic residues) spans 229–246 (DHPHGGGEGKTGEGRHPV).

It belongs to the universal ribosomal protein uL2 family. As to quaternary structure, part of the 50S ribosomal subunit. Forms a bridge to the 30S subunit in the 70S ribosome.

Its function is as follows. One of the primary rRNA binding proteins. Required for association of the 30S and 50S subunits to form the 70S ribosome, for tRNA binding and peptide bond formation. It has been suggested to have peptidyltransferase activity; this is somewhat controversial. Makes several contacts with the 16S rRNA in the 70S ribosome. This is Large ribosomal subunit protein uL2 from Variovorax paradoxus (strain S110).